We begin with the raw amino-acid sequence, 229 residues long: MAGVLVSGTDTGAGKTILCAALAAWWLAHRRTPAAILKPVQCGPGDREYYRTVFGDALSVLNPLYFEAPLAPPLAAAREGQTVDIGLLWKSYCEAAAGHALVLVEGVGGLGCPLGWDYTVADLARDWRLPVLLVAPLRLGVVGQLVAHTGFARAQNLDLSALVLSEIEPVSAEQRAQWADVQLIENLCHLPVLGVLSHLEAATDRAALAAAGSGLWLEAAGTLFTAERG.

Residue 12–17 (GAGKTI) coordinates ATP. Position 16 (T16) interacts with Mg(2+). The active site involves K38. ATP contacts are provided by residues D46, 105-108 (EGVG), and 165-166 (SE). Residues D46 and E105 each contribute to the Mg(2+) site.

The protein belongs to the dethiobiotin synthetase family. As to quaternary structure, homodimer. Mg(2+) is required as a cofactor.

The protein resides in the cytoplasm. The enzyme catalyses (7R,8S)-7,8-diammoniononanoate + CO2 + ATP = (4R,5S)-dethiobiotin + ADP + phosphate + 3 H(+). The catalysed reaction is (7R,8S)-8-amino-7-(carboxyamino)nonanoate + ATP = (4R,5S)-dethiobiotin + ADP + phosphate + H(+). The protein operates within cofactor biosynthesis; biotin biosynthesis; biotin from 7,8-diaminononanoate: step 1/2. Catalyzes a mechanistically unusual reaction, the ATP-dependent insertion of CO2 between the N7 and N8 nitrogen atoms of 7,8-diaminopelargonic acid (DAPA, also called 7,8-diammoniononanoate) to form a ureido ring. This cyanobacterium does not encode bioA (which catalyzes the formation of the precursor for this reaction in the cannonical pathway), instead it encodes bioU, which replaces bioA and also performs the first half of the cannonical BioD reaction. Thus in this organism BioD has a different substrate. The chain is ATP-dependent dethiobiotin synthetase BioD from Gloeobacter violaceus (strain ATCC 29082 / PCC 7421).